Here is a 156-residue protein sequence, read N- to C-terminus: Probable cyclic pyranopterin monophosphate synthase (156 aa).

Residues 73 to 75 (MCH) and 109 to 110 (ME) each bind substrate. The active site involves aspartate 124.

This sequence belongs to the MoaC family. As to quaternary structure, homohexamer; trimer of dimers.

The catalysed reaction is (8S)-3',8-cyclo-7,8-dihydroguanosine 5'-triphosphate = cyclic pyranopterin phosphate + diphosphate. It participates in cofactor biosynthesis; molybdopterin biosynthesis. Functionally, catalyzes the conversion of (8S)-3',8-cyclo-7,8-dihydroguanosine 5'-triphosphate to cyclic pyranopterin monophosphate (cPMP). The chain is Probable cyclic pyranopterin monophosphate synthase from Archaeoglobus fulgidus (strain ATCC 49558 / DSM 4304 / JCM 9628 / NBRC 100126 / VC-16).